Reading from the N-terminus, the 257-residue chain is Electron transfer flavoprotein subunit beta (257 aa).

The protein belongs to the ETF beta-subunit/FixA family. As to quaternary structure, heterodimer of an alpha and a beta subunit. The cofactor is FAD. It depends on AMP as a cofactor.

Functionally, the electron transfer flavoprotein serves as a specific electron acceptor for other dehydrogenases. It transfers the electrons to the main respiratory chain via ETF-ubiquinone oxidoreductase (ETF dehydrogenase). The polypeptide is Electron transfer flavoprotein subunit beta (etfB) (Bacillus subtilis (strain 168)).